Consider the following 236-residue polypeptide: 2,3,4,5-tetrahydropyridine-2,6-dicarboxylate N-acetyltransferase (236 aa).

It belongs to the transferase hexapeptide repeat family. DapH subfamily.

It carries out the reaction (S)-2,3,4,5-tetrahydrodipicolinate + acetyl-CoA + H2O = L-2-acetamido-6-oxoheptanedioate + CoA. It functions in the pathway amino-acid biosynthesis; L-lysine biosynthesis via DAP pathway; LL-2,6-diaminopimelate from (S)-tetrahydrodipicolinate (acetylase route): step 1/3. In terms of biological role, catalyzes the transfer of an acetyl group from acetyl-CoA to tetrahydrodipicolinate. The polypeptide is 2,3,4,5-tetrahydropyridine-2,6-dicarboxylate N-acetyltransferase (Clostridium botulinum (strain ATCC 19397 / Type A)).